Reading from the N-terminus, the 288-residue chain is NAD kinase (288 aa).

The active-site Proton acceptor is Asp70. NAD(+) is bound by residues 70–71 (DG), 144–145 (ND), Arg155, Lys172, Asp174, 185–190 (TGYSLS), and Gln245.

It belongs to the NAD kinase family. Requires a divalent metal cation as cofactor.

The protein localises to the cytoplasm. It catalyses the reaction NAD(+) + ATP = ADP + NADP(+) + H(+). In terms of biological role, involved in the regulation of the intracellular balance of NAD and NADP, and is a key enzyme in the biosynthesis of NADP. Catalyzes specifically the phosphorylation on 2'-hydroxyl of the adenosine moiety of NAD to yield NADP. The sequence is that of NAD kinase from Citrifermentans bemidjiense (strain ATCC BAA-1014 / DSM 16622 / JCM 12645 / Bem) (Geobacter bemidjiensis).